The primary structure comprises 294 residues: Small ribosomal subunit protein uS2 (294 aa).

Positions 254–294 (ESSNTEAPVAETAAAEAPVADAAIEAPVAEEAKTTEADDTK) are disordered. Low complexity predominate over residues 259-282 (EAPVAETAAAEAPVADAAIEAPVA). Basic and acidic residues predominate over residues 283–294 (EEAKTTEADDTK).

It belongs to the universal ribosomal protein uS2 family.

The protein is Small ribosomal subunit protein uS2 of Renibacterium salmoninarum (strain ATCC 33209 / DSM 20767 / JCM 11484 / NBRC 15589 / NCIMB 2235).